The chain runs to 706 residues: Probable N(6)-adenosine-methyltransferase MT-A70-like (706 aa).

2 disordered regions span residues 64–114 (RPFV…VAAA) and 223–261 (TLPL…PDMW). The segment covering 103 to 114 (SPGSSPASVAAA) has biased composition (low complexity). The segment covering 227-236 (LQPPPAPQMP) has biased composition (pro residues). S-adenosyl-L-methionine is bound by residues 479-480 (DI) and D497. The interval 567–580 (RIIRTGRTGHWLNH) is positively charged region required for RNA-binding. S-adenosyl-L-methionine contacts are provided by residues K614, 637-640 (RMHN), and 650-651 (NQ). The disordered stretch occupies residues 669 to 706 (AYPDSEVQPPSPPRASAPIDGDQGTSQKPTVSDGERPA).

The protein belongs to the MT-A70-like family.

It is found in the nucleus. It carries out the reaction an adenosine in mRNA + S-adenosyl-L-methionine = an N(6)-methyladenosine in mRNA + S-adenosyl-L-homocysteine + H(+). Functionally, probable N6-methyltransferase that methylates adenosine residues of some mRNAs. N6-methyladenosine (m6A), which is present at internal sites of some mRNAs, may play a role in the efficiency of mRNA splicing, transport or translation. The protein is Probable N(6)-adenosine-methyltransferase MT-A70-like of Oryza sativa subsp. japonica (Rice).